Reading from the N-terminus, the 271-residue chain is PH domain-containing protein ECU06_0670 (271 aa).

The tract at residues 26–145 (AKKTLDSSES…EKKNDAFIPP (120 aa)) is disordered. 3 stretches are compositionally biased toward basic and acidic residues: residues 42–64 (EVGE…EPAM), 92–120 (QPEK…LLDK), and 128–140 (EENA…KKND). The region spanning 166 to 267 (NTVVEGWMWK…WVEKLNETIR (102 aa)) is the PH domain.

The sequence is that of PH domain-containing protein ECU06_0670 from Encephalitozoon cuniculi (strain GB-M1) (Microsporidian parasite).